The sequence spans 473 residues: Lipid A galacturonosyltransferase RgtD (473 aa).

10 helical membrane passes run 6 to 26, 68 to 88, 94 to 114, 118 to 138, 160 to 180, 190 to 210, 238 to 258, 271 to 291, 295 to 315, and 327 to 347; these read GLLI…FDAT, AIYW…LVLM, FVGP…PGVA, VFFS…LAYF, FLTK…LLLI, VIIA…WNLQ, FFAA…LWAV, KMLV…ATVA, ANWA…LLYL, and INGI…QLLL.

It localises to the cell membrane. It functions in the pathway bacterial outer membrane biogenesis; LPS lipid A biosynthesis. Functionally, involved in the modification of the lipopolysaccharide (LPS) lipid A moiety. Catalyzes the transfer of a galacturonic acid (GalA) residue to the 4'-position of 4'-dephosphorylated lipid A, using dodecaprenyl phosphate-GalA as the donor substrate. Acts before the other GalA transferases RgtA, RgtB and RgtC. The protein is Lipid A galacturonosyltransferase RgtD of Rhizobium johnstonii (strain DSM 114642 / LMG 32736 / 3841) (Rhizobium leguminosarum bv. viciae).